The following is a 1107-amino-acid chain: uncharacterized protein (1107 aa).

Low complexity predominate over residues 180-204 (SGNGSSGGNNNNNNNSLNNSNNSIG). 2 disordered regions span residues 180–251 (SGNG…SGNN) and 501–530 (LMNINNNNNNNNSNNNNNNNDQNKDKDNQM). A compositionally biased stretch (gly residues) spans 205–215 (SSGGNGGGGSN). Polar residues predominate over residues 219-237 (PSMSPQFTSISKTNSPQII). 2 stretches are compositionally biased toward low complexity: residues 238 to 251 (NTSSNNLNSSSGNN) and 501 to 521 (LMNINNNNNNNNSNNNNNNND). Coiled coils occupy residues 789 to 816 (KKDIIEHLTQRHNQYQSNINEDEQIYRE) and 940 to 1012 (NIDH…NMLK).

This is an uncharacterized protein from Dictyostelium discoideum (Social amoeba).